The primary structure comprises 566 residues: Poly(A) polymerase pla1 (566 aa).

Residues 86-88 (YGS), 99-101 (DID), aspartate 153, lysine 214, tyrosine 223, and 232-233 (GV) each bind ATP. Mg(2+) is bound by residues aspartate 99, aspartate 101, and aspartate 153. 2 disordered regions span residues 437–463 (HEKL…SENG) and 530–566 (DEVF…VSTA).

This sequence belongs to the poly(A) polymerase family. Mg(2+) is required as a cofactor. Mn(2+) serves as cofactor.

Its subcellular location is the nucleus. The enzyme catalyses RNA(n) + ATP = RNA(n)-3'-adenine ribonucleotide + diphosphate. Polymerase that creates the 3'-poly(A) tail of mRNA's. May acquire specificity through interaction with a cleavage and polyadenylation factor (CF I). The sequence is that of Poly(A) polymerase pla1 (pla1) from Schizosaccharomyces pombe (strain 972 / ATCC 24843) (Fission yeast).